The chain runs to 399 residues: Coiled-coil domain-containing protein 85C-B (399 aa).

Coiled coils occupy residues 52–84 (NRSL…ELCC) and 113–144 (KEVS…DIIL). The disordered stretch occupies residues 151-199 (NGAGSRSSIDSQSSLSNLNGGSGTVRDVGDGSSTSSGGSAGSPDHHHNH). A compositionally biased stretch (low complexity) spans 155-169 (SRSSIDSQSSLSNLN).

This sequence belongs to the CCDC85 family.

The protein resides in the cell junction. The protein localises to the tight junction. It localises to the adherens junction. Its function is as follows. May play a role in cell-cell adhesion and epithelium development through its interaction with proteins of the beta-catenin family. May play an important role in cortical development, especially in the maintenance of radial glia. This is Coiled-coil domain-containing protein 85C-B (ccdc85cb) from Danio rerio (Zebrafish).